A 747-amino-acid polypeptide reads, in one-letter code: 3',5'-cyclic-AMP phosphodiesterase 4D (747 aa).

The interval 1 to 28 (MERDTCDVLSRSKSASEETLHSCNEEED) is disordered. Residues 14-24 (SASEETLHSCN) show a composition bias toward basic and acidic residues. A phosphoserine mark is found at serine 238, serine 240, serine 287, and serine 314. Residues 282 to 302 (EVEIPSPTQKEKEKKKRPMSQ) are disordered. The PDEase domain maps to 325-654 (VKTEQEDVLA…EWYQSTIPQS (330 aa)). Lysine 326 participates in a covalent cross-link: Glycyl lysine isopeptide (Lys-Gly) (interchain with G-Cter in SUMO). The active-site Proton donor is the histidine 401. A 3',5'-cyclic AMP-binding site is contributed by histidine 401. Histidine 401 contacts AMP. Residues histidine 405, histidine 441, aspartate 442, and aspartate 559 each coordinate Zn(2+). Aspartate 442, aspartate 559, asparagine 562, glutamine 610, and phenylalanine 613 together coordinate AMP. Aspartate 442 serves as a coordination point for Mg(2+). Position 442 (aspartate 442) interacts with Mn(2+). Glutamine 610 and phenylalanine 613 together coordinate 3',5'-cyclic AMP. Positions 649-747 (STIPQSPSPA…CVPDDCCPDT (99 aa)) are disordered. Positions 701–712 (CSDSKTLCTQDS) are enriched in polar residues. Over residues 718-734 (PLDEQVEEEAVAEEESQ) the composition is skewed to acidic residues.

Belongs to the cyclic nucleotide phosphodiesterase family. PDE4 subfamily. In terms of assembly, homodimer for the long isoforms. Isoforms with truncated N-termini are monomeric. Binds ARRB2. Interacts with PDE4DIP. Identified in a complex composed of RYR1, PDE4D, PKA, FKBP1A and protein phosphatase 1 (PP1). Interacts (via N-terminal region) with SHANK2 (via proline-rich region); the interaction is increased in a PKA-dependent manner. The cofactor is Zn(2+). It depends on Mg(2+) as a cofactor. Mn(2+) serves as cofactor. Sumoylation of long isoforms by PIAS4 augments their activation by PKA phosphorylation and represses their inhibition by ERK phosphorylation. In terms of tissue distribution, expressed in brain (at protein level). Isoform 7 is detected in heart, brain, lung, kidney and testis.

Its subcellular location is the cytoplasm. It is found in the membrane. The protein localises to the cytoskeleton. The protein resides in the microtubule organizing center. It localises to the centrosome. Its subcellular location is the apical cell membrane. It carries out the reaction 3',5'-cyclic AMP + H2O = AMP + H(+). Its pathway is purine metabolism; 3',5'-cyclic AMP degradation; AMP from 3',5'-cyclic AMP: step 1/1. With respect to regulation, inhibited by rolipram. Activated by phosphatidic acid. Its function is as follows. Hydrolyzes the second messenger cAMP, which is a key regulator of many important physiological processes. The sequence is that of 3',5'-cyclic-AMP phosphodiesterase 4D (Pde4d) from Mus musculus (Mouse).